The sequence spans 104 residues: Cell division protein FtsL (104 aa).

The Cytoplasmic portion of the chain corresponds to 1–19 (MSTPNTHLLCLIATDLRKH). A helical transmembrane segment spans residues 20–39 (FFAVLVGMLIVCSAIYNVYT). Over 40–104 (THKTRGLVTQ…KKNSVLVELR (65 aa)) the chain is Periplasmic.

This sequence belongs to the FtsL family. In terms of assembly, part of a complex composed of FtsB, FtsL and FtsQ.

The protein localises to the cell inner membrane. Essential cell division protein. May link together the upstream cell division proteins, which are predominantly cytoplasmic, with the downstream cell division proteins, which are predominantly periplasmic. In Psychromonas ingrahamii (strain DSM 17664 / CCUG 51855 / 37), this protein is Cell division protein FtsL.